The primary structure comprises 588 residues: Adenine deaminase (588 aa).

The protein belongs to the metallo-dependent hydrolases superfamily. Adenine deaminase family. Homodimer. Requires Mn(2+) as cofactor.

It catalyses the reaction adenine + H2O + H(+) = hypoxanthine + NH4(+). The chain is Adenine deaminase from Shigella boydii serotype 4 (strain Sb227).